A 126-amino-acid chain; its full sequence is MASPHRLLKDYQQLLSLSQKILHLAVNGQWDTLVEQEIVYVQSVEGLVNTPIPDEIDSVMRLHLRQILQEVMDNEAKVKQLLQKRMDELSSLMGQSLKQKSINTTYNEFAGQRMLPGDALPDETRS.

The segment at 1–50 (MASPHRLLKDYQQLLSLSQKILHLAVNGQWDTLVEQEIVYVQSVEGLVNT) is required for homodimerization. A fliD binding region spans residues 60–98 (MRLHLRQILQEVMDNEAKVKQLLQKRMDELSSLMGQSLK).

It belongs to the FliT family. In terms of assembly, homodimer. Interacts with FliD and FlhC.

It localises to the cytoplasm. It is found in the cytosol. Functionally, dual-function protein that regulates the transcription of class 2 flagellar operons and that also acts as an export chaperone for the filament-capping protein FliD. As a transcriptional regulator, acts as an anti-FlhDC factor; it directly binds FlhC, thus inhibiting the binding of the FlhC/FlhD complex to class 2 promoters, resulting in decreased expression of class 2 flagellar operons. As a chaperone, effects FliD transition to the membrane by preventing its premature polymerization, and by directing it to the export apparatus. This is Flagellar protein FliT from Pectobacterium carotovorum subsp. carotovorum (strain PC1).